Here is a 346-residue protein sequence, read N- to C-terminus: Acetylpolyamine amidohydrolase 1 (346 aa).

His-161 acts as the Proton donor/acceptor in catalysis. Zn(2+) contacts are provided by Asp-197, His-199, and Asp-286.

The protein belongs to the histone deacetylase family. Homodimer. Zn(2+) serves as cofactor.

It catalyses the reaction N-acetylputrescine + H2O = putrescine + acetate. The catalysed reaction is N-acetylcadaverine + H2O = cadaverine + acetate. It carries out the reaction N(1)-acetylspermine + H2O = spermine + acetate. The enzyme catalyses N(1)-acetylspermidine + H2O = spermidine + acetate. The protein operates within amine and polyamine metabolism. Catalyzes the deacetylation of acetylated polyamines such as N-acetylputrescine, N-acetylcadaverine, N(1)-acetylspermine and N(1)-acetylspermidine. Plays an important role in the metabolism of acetylated polyamines in P.aeruginosa. Is involved in the degradation pathways of N-acetylputrescine and N-acetylcadaverine, that allow P.aeruginosa to utilize these acetylpolyamines as a carbon source under glucose starvation. In vitro, can also hydrolyze artificial trifluoroacetylated and acetylated lysine-derivatives. The chain is Acetylpolyamine amidohydrolase 1 from Pseudomonas aeruginosa (strain ATCC 15692 / DSM 22644 / CIP 104116 / JCM 14847 / LMG 12228 / 1C / PRS 101 / PAO1).